Here is a 415-residue protein sequence, read N- to C-terminus: Phosphopentomutase (415 aa).

Asp10, Asp313, His318, Asp354, His355, and His366 together coordinate Mn(2+).

It belongs to the phosphopentomutase family. The cofactor is Mn(2+).

The protein localises to the cytoplasm. It catalyses the reaction 2-deoxy-alpha-D-ribose 1-phosphate = 2-deoxy-D-ribose 5-phosphate. It carries out the reaction alpha-D-ribose 1-phosphate = D-ribose 5-phosphate. It functions in the pathway carbohydrate degradation; 2-deoxy-D-ribose 1-phosphate degradation; D-glyceraldehyde 3-phosphate and acetaldehyde from 2-deoxy-alpha-D-ribose 1-phosphate: step 1/2. Functionally, isomerase that catalyzes the conversion of deoxy-ribose 1-phosphate (dRib-1-P) and ribose 1-phosphate (Rib-1-P) to deoxy-ribose 5-phosphate (dRib-5-P) and ribose 5-phosphate (Rib-5-P), respectively. The polypeptide is Phosphopentomutase (Psychromonas ingrahamii (strain DSM 17664 / CCUG 51855 / 37)).